The following is an 89-amino-acid chain: Small ribosomal subunit protein uS15 (89 aa).

The span at 1–11 (MSIAAERKAEV) shows a compositional bias: basic and acidic residues. Residues 1 to 25 (MSIAAERKAEVIKTSANKPGDTGSP) form a disordered region.

The protein belongs to the universal ribosomal protein uS15 family. Part of the 30S ribosomal subunit. Forms a bridge to the 50S subunit in the 70S ribosome, contacting the 23S rRNA.

Its function is as follows. One of the primary rRNA binding proteins, it binds directly to 16S rRNA where it helps nucleate assembly of the platform of the 30S subunit by binding and bridging several RNA helices of the 16S rRNA. In terms of biological role, forms an intersubunit bridge (bridge B4) with the 23S rRNA of the 50S subunit in the ribosome. The chain is Small ribosomal subunit protein uS15 from Nitrobacter winogradskyi (strain ATCC 25391 / DSM 10237 / CIP 104748 / NCIMB 11846 / Nb-255).